The primary structure comprises 159 residues: Ribosomal RNA large subunit methyltransferase H (159 aa).

Positions 76 and 108 each coordinate S-adenosyl-L-methionine.

The protein belongs to the RNA methyltransferase RlmH family. Homodimer.

The protein localises to the cytoplasm. The catalysed reaction is pseudouridine(1915) in 23S rRNA + S-adenosyl-L-methionine = N(3)-methylpseudouridine(1915) in 23S rRNA + S-adenosyl-L-homocysteine + H(+). In terms of biological role, specifically methylates the pseudouridine at position 1915 (m3Psi1915) in 23S rRNA. The polypeptide is Ribosomal RNA large subunit methyltransferase H (Levilactobacillus brevis (strain ATCC 367 / BCRC 12310 / CIP 105137 / JCM 1170 / LMG 11437 / NCIMB 947 / NCTC 947) (Lactobacillus brevis)).